Here is a 150-residue protein sequence, read N- to C-terminus: Large ribosomal subunit protein bL9 (150 aa).

Belongs to the bacterial ribosomal protein bL9 family.

Its function is as follows. Binds to the 23S rRNA. This Shewanella denitrificans (strain OS217 / ATCC BAA-1090 / DSM 15013) protein is Large ribosomal subunit protein bL9.